The chain runs to 198 residues: MARTPVRQHLVEKGTQVFLERGYSGSAVQDITAAAEVPKGSFYNHFESKEAFGGQVLQEFFSDLQRTISSTLEDASVPPVRRLQNYFAAIIETLDGQGCLIGNFSVELSPLSDVVRTELLRIFEQWVKPFQKCIIEGQETGSIRRDLAPDLLADFLIASWQGAILRMKIERNREPLDQFLTVVFEALLPSTENISNES.

The HTH tetR-type domain occupies 4 to 64 (TPVRQHLVEK…QVLQEFFSDL (61 aa)).

Functionally, transcriptional repressor for the dhaA haloalkane dehalogenase gene. This chain is HTH-type transcriptional repressor DhaR (dhaR), found in Mycobacterium sp. (strain GP1).